The following is a 397-amino-acid chain: Putative protein FAM47D (397 aa).

This sequence belongs to the FAM47 family.

The sequence is that of Putative protein FAM47D (FAM47DP) from Homo sapiens (Human).